The sequence spans 508 residues: Bifunctional NAD(P)H-hydrate repair enzyme Nnr (508 aa).

Residues 1–224 form an NAD(P)H-hydrate epimerase region; the sequence is MSGLCACTLV…QVRSVLGEDH (224 aa). In terms of domain architecture, YjeF N-terminal spans 15–217; the sequence is VQQLEAALFA…EIGFSEAQVR (203 aa). Residues 64 to 68 are NADPHX 1; for epimerase activity; that stretch reads HNGGD. 2 residues coordinate K(+): N65 and D126. Residues 130–136 are NADPHX 1; for epimerase activity; it reads GFGLERP. (6S)-NADPHX-binding residues include Y141 and D159. Position 162 (S162) interacts with K(+). The YjeF C-terminal domain maps to 232 to 506; it reads PDAARAGLPL…LGLLPFLAAD (275 aa). Residues 232–508 form an ADP-dependent (S)-NAD(P)H-hydrate dehydratase region; it reads PDAARAGLPL…LLPFLAADGP (277 aa). Residue G334 participates in (6S)-NADPHX binding. The tract at residues 383-389 is NADPHX 2; for dehydratase activity; the sequence is HPGEFKR. ADP is bound by residues 417–421 and 437–446; these read KGART and SPALARGGSG. D447 serves as a coordination point for (6S)-NADPHX.

This sequence in the N-terminal section; belongs to the NnrE/AIBP family. It in the C-terminal section; belongs to the NnrD/CARKD family. K(+) serves as cofactor.

It carries out the reaction (6S)-NADHX + ADP = AMP + phosphate + NADH + H(+). The catalysed reaction is (6S)-NADPHX + ADP = AMP + phosphate + NADPH + H(+). The enzyme catalyses (6R)-NADHX = (6S)-NADHX. It catalyses the reaction (6R)-NADPHX = (6S)-NADPHX. In terms of biological role, bifunctional enzyme that catalyzes the epimerization of the S- and R-forms of NAD(P)HX and the dehydration of the S-form of NAD(P)HX at the expense of ADP, which is converted to AMP. This allows the repair of both epimers of NAD(P)HX, a damaged form of NAD(P)H that is a result of enzymatic or heat-dependent hydration. The polypeptide is Bifunctional NAD(P)H-hydrate repair enzyme Nnr (nnr) (Gloeobacter violaceus (strain ATCC 29082 / PCC 7421)).